A 473-amino-acid chain; its full sequence is Ribulose bisphosphate carboxylase large chain (473 aa).

Substrate is bound by residues Asn116 and Thr166. Lys168 acts as the Proton acceptor in catalysis. Residue Lys170 coordinates substrate. 3 residues coordinate Mg(2+): Lys194, Asp196, and Glu197. Lys194 carries the post-translational modification N6-carboxylysine. The active-site Proton acceptor is the His287. 3 residues coordinate substrate: Arg288, His320, and Ser372.

The protein belongs to the RuBisCO large chain family. Type I subfamily. As to quaternary structure, heterohexadecamer of 8 large chains and 8 small chains. It depends on Mg(2+) as a cofactor.

The catalysed reaction is 2 (2R)-3-phosphoglycerate + 2 H(+) = D-ribulose 1,5-bisphosphate + CO2 + H2O. The enzyme catalyses D-ribulose 1,5-bisphosphate + O2 = 2-phosphoglycolate + (2R)-3-phosphoglycerate + 2 H(+). Functionally, ruBisCO catalyzes two reactions: the carboxylation of D-ribulose 1,5-bisphosphate, the primary event in carbon dioxide fixation, as well as the oxidative fragmentation of the pentose substrate. Both reactions occur simultaneously and in competition at the same active site. In Cupriavidus metallidurans (strain ATCC 43123 / DSM 2839 / NBRC 102507 / CH34) (Ralstonia metallidurans), this protein is Ribulose bisphosphate carboxylase large chain.